We begin with the raw amino-acid sequence, 300 residues long: Meiotically up-regulated gene 165 protein (300 aa).

2 disordered regions span residues 1–38 and 50–109; these read MLEK…HKPS and TNSS…STLE. The segment covering 21–38 has biased composition (polar residues); that stretch reads ESHTFSSQTDDSYFHKPS. The span at 52 to 69 shows a compositional bias: low complexity; sequence SSVPSASRSPESIASSQS. Residues 94–103 are compositionally biased toward basic residues; that stretch reads TLRKRGRKPK.

Its subcellular location is the nucleus. Has a role in meiosis. The polypeptide is Meiotically up-regulated gene 165 protein (mug165) (Schizosaccharomyces pombe (strain 972 / ATCC 24843) (Fission yeast)).